A 186-amino-acid chain; its full sequence is UPF0397 protein SGO_0469 (186 aa).

5 helical membrane passes run 14–34 (VVATGIGAALFVVIGMVSIPT), 50–70 (LFGVVFGPIVGFLTGFIGHAL), 77–97 (GNPWWTWVLASGLFGLVVGLL), 119–139 (AQFVANALVWVVIAPLGDILI), and 152–172 (VVATVANGLTVAVAGTLLLIA).

It belongs to the UPF0397 family.

Its subcellular location is the cell membrane. The sequence is that of UPF0397 protein SGO_0469 from Streptococcus gordonii (strain Challis / ATCC 35105 / BCRC 15272 / CH1 / DL1 / V288).